A 35-amino-acid polypeptide reads, in one-letter code: Bacteriocin SRCAM 1580 (35 aa).

This sequence belongs to the bacteriocin class IIA/YGNGV family.

Its subcellular location is the secreted. Its function is as follows. Bacteriocin with antibacterial activity against C.jejuni. The sequence is that of Bacteriocin SRCAM 1580 from Niallia circulans (Bacillus circulans).